Reading from the N-terminus, the 717-residue chain is Cleavage stimulation factor subunit 3 (717 aa).

N-acetylserine is present on Ser-2. 9 HAT repeats span residues 45-77, 79-110, 117-152, 163-196, 221-261, 271-303, 319-352, 354-387, and 458-494; these read QPIDKARKTYERLVAQFPSSGRFWKLYIEAEIK, KNYDKVEKLFQRCLMKVLHIDLWKCYLSYVRE, SYKEKMAQAYDFALDKIGMEIMSYQIWVDYINFLKG, QRITAVRRVYQRGCVNPMINIEQLWRDYNKYEEG, KEYE…WEKS, LITKRVMFAYEQCLLVLGHHPDIWYEAAQYLEQ, LFSDEAANIYERAISTLLKKNMLLYFAYADYEES, MKYEKVHSIYNRLLAIEDIDPTLVYIQYMKFARR, and NEDNNTRVLFERVLTSGSLPPEKSGEIWARFLAFESN. Positions 684–705 are disordered; the sequence is VKRPNEDSDEDEEKGAVVPPVH. Phosphoserine is present on Ser-691.

Homodimer. The CSTF complex is composed of CSTF1 (50 kDa subunit), CSTF2 (64 kDa subunit) and CSTF3 (77 kDa subunit). CSTF3 directly interacts with CSTF1 and CSTF2. Interacts with FIP1L1.

The protein resides in the nucleus. Its function is as follows. One of the multiple factors required for polyadenylation and 3'-end cleavage of mammalian pre-mRNAs. This is Cleavage stimulation factor subunit 3 (CSTF3) from Homo sapiens (Human).